Consider the following 266-residue polypeptide: Translation initiation factor 2 subunit alpha (266 aa).

One can recognise an S1 motif domain in the interval 12 to 83; that stretch reads GEILIATVKQ…RKGTVDVSLK (72 aa).

This sequence belongs to the eIF-2-alpha family. As to quaternary structure, heterotrimer composed of an alpha, a beta and a gamma chain.

Functionally, eIF-2 functions in the early steps of protein synthesis by forming a ternary complex with GTP and initiator tRNA. The protein is Translation initiation factor 2 subunit alpha of Saccharolobus islandicus (strain M.16.27) (Sulfolobus islandicus).